A 756-amino-acid chain; its full sequence is Anaphase-promoting complex subunit 5 (756 aa).

TPR repeat units follow at residues 301-334 (RYAA…AQES), 522-555 (DGRY…KAQN), 581-614 (ISVL…SREY), and 678-711 (YSQQ…EQLR).

It belongs to the APC5 family. The APC/C is composed of at least 12 subunits.

It localises to the nucleus. The protein resides in the cytoplasm. It is found in the cytoskeleton. The protein localises to the spindle. Its pathway is protein modification; protein ubiquitination. In terms of biological role, component of the anaphase promoting complex/cyclosome (APC/C), a cell cycle-regulated E3 ubiquitin ligase that controls progression through mitosis and the G1 phase of the cell cycle. The APC/C complex acts by mediating ubiquitination and subsequent degradation of target proteins: it mainly mediates the formation of 'Lys-11'-linked polyubiquitin chains and, to a lower extent, the formation of 'Lys-48'- and 'Lys-63'-linked polyubiquitin chains. The APC/C complex catalyzes assembly of branched 'Lys-11'-/'Lys-48'-linked branched ubiquitin chains on target proteins. The polypeptide is Anaphase-promoting complex subunit 5 (ANAPC5) (Gallus gallus (Chicken)).